Reading from the N-terminus, the 326-residue chain is tRNA uridine(34) hydroxylase (326 aa).

The 97-residue stretch at 122–218 folds into the Rhodanese domain; that stretch reads EENRCLVLDV…YGQAVGTGKW (97 aa). Cys-178 acts as the Cysteine persulfide intermediate in catalysis.

This sequence belongs to the TrhO family.

The enzyme catalyses uridine(34) in tRNA + AH2 + O2 = 5-hydroxyuridine(34) in tRNA + A + H2O. Catalyzes oxygen-dependent 5-hydroxyuridine (ho5U) modification at position 34 in tRNAs. This chain is tRNA uridine(34) hydroxylase, found in Chlamydia abortus (strain DSM 27085 / S26/3) (Chlamydophila abortus).